Here is a 130-residue protein sequence, read N- to C-terminus: MTGNDPFANALSALNNAESVGHLEQTVSPASNEIGSVLEVFYDRGYIDGFSFVDDGKAGEFEVELKGAINECGPVKPRYSAGADEFEKWEKRFLPARDYGTLVVTTSHGIMSHYEAREQGVGGQVIAYVY.

It belongs to the universal ribosomal protein uS8 family. In terms of assembly, part of the 30S ribosomal subunit.

One of the primary rRNA binding proteins, it binds directly to 16S rRNA central domain where it helps coordinate assembly of the platform of the 30S subunit. This Haloarcula marismortui (strain ATCC 43049 / DSM 3752 / JCM 8966 / VKM B-1809) (Halobacterium marismortui) protein is Small ribosomal subunit protein uS8.